A 358-amino-acid polypeptide reads, in one-letter code: Endo-1,4-beta-xylanase B (358 aa).

Positions 1–17 are cleaved as a signal peptide; sequence MRFSASLLLALTGSAAA. In terms of domain architecture, GH10 spans 40-352; it reads QGLDAAMKAA…KAAYNAFLRG (313 aa). A glycan (N-linked (GlcNAc...) asparagine) is linked at N136. Residue E166 is the Proton donor of the active site. E274 acts as the Nucleophile in catalysis.

The protein belongs to the glycosyl hydrolase 10 (cellulase F) family.

Its subcellular location is the secreted. It catalyses the reaction Endohydrolysis of (1-&gt;4)-beta-D-xylosidic linkages in xylans.. Its pathway is glycan degradation; xylan degradation. Partial inhibition of activity is detected in the presence of Ag(+), Cu2(+) and SDS. Like most fungal xylanases, activity is completely inhibited by Hg(2+) since Hg(2+) could interact with tryptophan residues and oxidize the indole ring. Beta-mercaptoethanol enhances the enzymatic activity by counteracting the oxidation effects of the S-S linkage between cysteine residues. Endo-1,4-beta-xylanase involved in the hydrolysis of xylan, a major structural heterogeneous polysaccharide found in plant biomass representing the second most abundant polysaccharide in the biosphere, after cellulose. Is more active on soluble wheat arabinoxylan (defined as 100%) than on birchwood xylan (75.4%) and beechwood xylan (70.8%), and less active on insoluble wheat arabinoxylan (17.4%). Xylose is the major hydrolysis product of XynB. The polypeptide is Endo-1,4-beta-xylanase B (Humicola insolens (Soft-rot fungus)).